The primary structure comprises 226 residues: Putative integrase V10 (226 aa).

Residues Arg97, His174, and Arg177 contribute to the active site. The O-(3'-phospho-DNA)-tyrosine intermediate role is filled by Tyr210.

Belongs to the 'phage' integrase family.

Functionally, may catalyze site-specific integration of viral genome into host or helper virus DNA. This Acanthamoeba polyphaga (Amoeba) protein is Putative integrase V10.